Reading from the N-terminus, the 438-residue chain is Gamma-glutamyl phosphate reductase (438 aa).

It belongs to the gamma-glutamyl phosphate reductase family.

Its subcellular location is the cytoplasm. The catalysed reaction is L-glutamate 5-semialdehyde + phosphate + NADP(+) = L-glutamyl 5-phosphate + NADPH + H(+). Its pathway is amino-acid biosynthesis; L-proline biosynthesis; L-glutamate 5-semialdehyde from L-glutamate: step 2/2. Its function is as follows. Catalyzes the NADPH-dependent reduction of L-glutamate 5-phosphate into L-glutamate 5-semialdehyde and phosphate. The product spontaneously undergoes cyclization to form 1-pyrroline-5-carboxylate. The chain is Gamma-glutamyl phosphate reductase from Prochlorococcus marinus (strain MIT 9313).